The primary structure comprises 250 residues: Gamma-secretase subunit APH1-like (250 aa).

The next 7 membrane-spanning stretches (helical) occupy residues 5–25, 29–49, 57–77, 116–136, 157–177, 191–211, and 212–232; these read AGIG…VSVI, PFLI…LIIL, LPLK…SVCF, IALA…CLSL, FLIS…SMVI, IIVP…FASE, and GCVI…VHCG.

This sequence belongs to the APH-1 family. Probable component of the gamma-secretase complex, a complex composed of a presenilin homodimer, nicastrin, APH1 and PEN2.

It localises to the membrane. Functionally, probable subunit of the gamma-secretase complex, an endoprotease complex that catalyzes the intramembrane cleavage of integral proteins such as Notch receptors. In Arabidopsis thaliana (Mouse-ear cress), this protein is Gamma-secretase subunit APH1-like.